The primary structure comprises 385 residues: 8-amino-7-oxononanoate synthase (385 aa).

Substrate is bound at residue Arg21. 108 to 109 serves as a coordination point for pyridoxal 5'-phosphate; it reads GF. His133 is a binding site for substrate. 3 residues coordinate pyridoxal 5'-phosphate: Ser179, His207, and Thr233. N6-(pyridoxal phosphate)lysine is present on Lys236. Position 352 (Thr352) interacts with substrate.

It belongs to the class-II pyridoxal-phosphate-dependent aminotransferase family. BioF subfamily. As to quaternary structure, homodimer. Pyridoxal 5'-phosphate serves as cofactor.

It catalyses the reaction 6-carboxyhexanoyl-[ACP] + L-alanine + H(+) = (8S)-8-amino-7-oxononanoate + holo-[ACP] + CO2. It participates in cofactor biosynthesis; biotin biosynthesis. In terms of biological role, catalyzes the decarboxylative condensation of pimeloyl-[acyl-carrier protein] and L-alanine to produce 8-amino-7-oxononanoate (AON), [acyl-carrier protein], and carbon dioxide. This Salmonella enteritidis PT4 (strain P125109) protein is 8-amino-7-oxononanoate synthase.